A 226-amino-acid chain; its full sequence is RNA annealing protein YRA1 (226 aa).

Residues 1-62 (MSANLDKSLD…PIRKNTRAPP (62 aa)) form a disordered region. Residue Ser2 is modified to N-acetylserine. Ser8 and Ser100 each carry phosphoserine. Residues 78–158 (VKVNVEGLPR…SRLRLNLIVD (81 aa)) enclose the RRM domain. The segment at 173 to 226 (AMPQKGGNAPRPVKRGPNRKAAMAKSQNKPKREKPAKKSLEDLDKEMADYFEKK) is disordered. A compositionally biased stretch (basic and acidic residues) spans 208-226 (AKKSLEDLDKEMADYFEKK).

Component of the transcription/export (TREX) complex, which is at least is formed of SUB2, TEX1 and YRA1 and the THO complex composed of HPR1, MFT1, THO2 and THP1. Interacts with RDS3 and YRA2.

Its subcellular location is the nucleus. Its function is as follows. RNA-binding RNA annealing protein. May have a role in pre-mRNA metabolism. Component the TREX complex, which operates in coupling transcription elongation to mRNA export. This is RNA annealing protein YRA1 (YRA1) from Saccharomyces cerevisiae (strain ATCC 204508 / S288c) (Baker's yeast).